The chain runs to 222 residues: Pyridoxine/pyridoxamine 5'-phosphate oxidase (222 aa).

Residues 14 to 17 and Lys71 each bind substrate; that span reads RRNY. FMN is bound by residues 66–71, 81–82, Arg87, Lys88, and Gln110; these read RTVLLK and FT. Substrate contacts are provided by Tyr128, Arg132, and Ser136. FMN-binding positions include 145 to 146 and Trp190; that span reads QS. Residue 196 to 198 participates in substrate binding; sequence RLN. Arg200 contacts FMN.

This sequence belongs to the pyridoxamine 5'-phosphate oxidase family. In terms of assembly, homodimer. FMN is required as a cofactor.

The catalysed reaction is pyridoxamine 5'-phosphate + O2 + H2O = pyridoxal 5'-phosphate + H2O2 + NH4(+). It carries out the reaction pyridoxine 5'-phosphate + O2 = pyridoxal 5'-phosphate + H2O2. Its pathway is cofactor metabolism; pyridoxal 5'-phosphate salvage; pyridoxal 5'-phosphate from pyridoxamine 5'-phosphate: step 1/1. It functions in the pathway cofactor metabolism; pyridoxal 5'-phosphate salvage; pyridoxal 5'-phosphate from pyridoxine 5'-phosphate: step 1/1. In terms of biological role, catalyzes the oxidation of either pyridoxine 5'-phosphate (PNP) or pyridoxamine 5'-phosphate (PMP) into pyridoxal 5'-phosphate (PLP). The protein is Pyridoxine/pyridoxamine 5'-phosphate oxidase of Prochlorococcus marinus (strain MIT 9303).